A 486-amino-acid chain; its full sequence is Catalase (486 aa).

The tract at residues 1–28 (MENKKLTAANGRPIADNQNSQTAGPRGP) is disordered. Active-site residues include histidine 54 and asparagine 127. Tyrosine 337 contributes to the heme binding site.

It belongs to the catalase family. In terms of assembly, homodimer. Heme serves as cofactor.

It catalyses the reaction 2 H2O2 = O2 + 2 H2O. In terms of biological role, decomposes hydrogen peroxide into water and oxygen; serves to protect cells from the toxic effects of hydrogen peroxide. May be involved in aerotolerance of B.fragilis. In Bacteroides fragilis (strain YCH46), this protein is Catalase (katA).